The following is a 265-amino-acid chain: Speedy protein E13 (265 aa).

The disordered stretch occupies residues 1–80; it reads MGQILGKIMM…EPEKELAPEP (80 aa). The span at 66 to 80 shows a compositional bias: acidic residues; sequence DESDDEPEKELAPEP.

The protein belongs to the Speedy/Ringo family.

The chain is Speedy protein E13 from Homo sapiens (Human).